Here is a 103-residue protein sequence, read N- to C-terminus: Cell division protein FtsB (103 aa).

The Cytoplasmic segment spans residues 1–3 (MGK). Residues 4–21 (LTLLLLAILVWLQYSLWF) traverse the membrane as a helical segment. The Periplasmic portion of the chain corresponds to 22 to 103 (GKNGIHDYTR…RAQSAGQNNR (82 aa)). Positions 31–71 (RVNDDVAAQQATNAKLKARNDQLFAEIDDLNGGQEALEERA) form a coiled coil.

The protein belongs to the FtsB family. Part of a complex composed of FtsB, FtsL and FtsQ.

The protein localises to the cell inner membrane. Functionally, essential cell division protein. May link together the upstream cell division proteins, which are predominantly cytoplasmic, with the downstream cell division proteins, which are predominantly periplasmic. This chain is Cell division protein FtsB, found in Escherichia coli O157:H7.